Reading from the N-terminus, the 314-residue chain is MKRSHYFIAVPLTSEAKQAISRFSGDASSSLPFRTWVHEEDYHITLAFLGDVPPGKMAPLCEAMAAVAAKSAPFSLALAGLGTFGERTAPRIFWQGVKEEAALNELRRDVYEACLSLGFSLDRRPFAPHITIARKWQGEAPFQPEALRSLPAASTVFSVPEIVLYRTNMEKTPKYETIAAFPLLGAPDGRTGEGMGQLLKLRDYISRYETDVYHYVPEFIRLKQWQWEQAKARWEAERDADGARREPGETWDFLLDKPSWWERLIGRWRRGPEPEMDEERSPAPSLSRAATLDELKWQFLDDLFELQGMPAGRL.

The active-site Proton donor is His43. 2 consecutive short sequence motifs (HXTX) follow at residues 43–46 (HITL) and 129–132 (HITI). Residue His129 is the Proton acceptor of the active site.

It belongs to the 2H phosphoesterase superfamily. ThpR family.

The catalysed reaction is a 3'-end 2',3'-cyclophospho-ribonucleotide-RNA + H2O = a 3'-end 2'-phospho-ribonucleotide-RNA + H(+). Functionally, hydrolyzes RNA 2',3'-cyclic phosphodiester to an RNA 2'-phosphomonoester. This chain is RNA 2',3'-cyclic phosphodiesterase, found in Geobacillus stearothermophilus (Bacillus stearothermophilus).